Consider the following 215-residue polypeptide: Protein transport protein sec22 (215 aa).

Over 1–194 (MVKSTTVTRL…RVNLEALWRQ (194 aa)) the chain is Cytoplasmic. Positions 9–118 (RLDGLPLAAS…YAFVQFDTFM (110 aa)) constitute a Longin domain. A v-SNARE coiled-coil homology domain is found at 133–193 (NLDKLNTELK…RRVNLEALWR (61 aa)). The chain crosses the membrane as a helical; Anchor for type IV membrane protein span at residues 195-215 (YGPVSIIALLFLIFVYWRFFA).

This sequence belongs to the synaptobrevin family. Component of two distinct SNARE complexes consisting of sed5, bos1, bet1 and sec22 or ufe1, use1, sec20 and sec22. Ykt6 can probably replace sec22 as subunit of either complex.

It localises to the membrane. The protein resides in the endoplasmic reticulum membrane. The protein localises to the golgi apparatus membrane. Functionally, nonessential SNARE involved in targeting and fusion of ER-derived transport vesicles with the Golgi complex as well as Golgi-derived retrograde transport vesicles with the ER. The protein is Protein transport protein sec22 (sec22) of Schizosaccharomyces pombe (strain 972 / ATCC 24843) (Fission yeast).